We begin with the raw amino-acid sequence, 554 residues long: Formate--tetrahydrofolate ligase (554 aa).

ATP is bound at residue 65 to 72 (TPLGEGKT).

The protein belongs to the formate--tetrahydrofolate ligase family.

The catalysed reaction is (6S)-5,6,7,8-tetrahydrofolate + formate + ATP = (6R)-10-formyltetrahydrofolate + ADP + phosphate. Its pathway is one-carbon metabolism; tetrahydrofolate interconversion. The protein is Formate--tetrahydrofolate ligase of Aliivibrio salmonicida (strain LFI1238) (Vibrio salmonicida (strain LFI1238)).